The chain runs to 362 residues: Sulfate/thiosulfate import ATP-binding protein CysA (362 aa).

In terms of domain architecture, ABC transporter spans 13–243; the sequence is ITVRDAYKRY…PTNAFVMSFL (231 aa). 45–52 is an ATP binding site; it reads GPSGSGKS.

This sequence belongs to the ABC transporter superfamily. Sulfate/tungstate importer (TC 3.A.1.6) family. In terms of assembly, the complex is composed of two ATP-binding proteins (CysA), two transmembrane proteins (CysT and CysW) and a solute-binding protein (CysP).

The protein resides in the cell membrane. It carries out the reaction sulfate(out) + ATP + H2O = sulfate(in) + ADP + phosphate + H(+). The enzyme catalyses thiosulfate(out) + ATP + H2O = thiosulfate(in) + ADP + phosphate + H(+). Its function is as follows. Part of the ABC transporter complex CysAWTP involved in sulfate/thiosulfate import. Responsible for energy coupling to the transport system. The polypeptide is Sulfate/thiosulfate import ATP-binding protein CysA (Mycolicibacterium paratuberculosis (strain ATCC BAA-968 / K-10) (Mycobacterium paratuberculosis)).